Here is a 191-residue protein sequence, read N- to C-terminus: dCTP deaminase, dUMP-forming (191 aa).

Residues K101–R106, D119, T127–E129, Q148, Y162, and Q174 contribute to the dCTP site. Catalysis depends on E129, which acts as the Proton donor/acceptor. Residues N169–I191 form a disordered region. The segment covering Y171–H183 has biased composition (polar residues).

Belongs to the dCTP deaminase family. As to quaternary structure, homotrimer.

It catalyses the reaction dCTP + 2 H2O = dUMP + NH4(+) + diphosphate. It participates in pyrimidine metabolism; dUMP biosynthesis; dUMP from dCTP: step 1/1. Its function is as follows. Bifunctional enzyme that catalyzes both the deamination of dCTP to dUTP and the hydrolysis of dUTP to dUMP without releasing the toxic dUTP intermediate. The polypeptide is dCTP deaminase, dUMP-forming (Pseudarthrobacter chlorophenolicus (strain ATCC 700700 / DSM 12829 / CIP 107037 / JCM 12360 / KCTC 9906 / NCIMB 13794 / A6) (Arthrobacter chlorophenolicus)).